Here is a 60-residue protein sequence, read N- to C-terminus: Three-finger toxin Mnn I (60 aa).

Cystine bridges form between Cys-3–Cys-22, Cys-17–Cys-39, Cys-41–Cys-52, and Cys-53–Cys-58.

Belongs to the three-finger toxin family. Short-chain subfamily. Type I alpha-neurotoxin sub-subfamily. In terms of tissue distribution, expressed by the venom gland.

Its subcellular location is the secreted. Its function is as follows. Binds to muscle nicotinic acetylcholine receptor (nAChR) and inhibit acetylcholine from binding to the receptor, thereby impairing neuromuscular transmission. This Micrurus nigrocinctus (Central American coral snake) protein is Three-finger toxin Mnn I.